The primary structure comprises 152 residues: Nucleoside diphosphate kinase B (152 aa).

Residues 1 to 66 (MANLERTFIA…DRPFFPGLVK (66 aa)) form an interaction with AKAP13 region. Positions 12, 60, 88, 94, 105, and 115 each coordinate ATP. Catalysis depends on His-118, which acts as the Pros-phosphohistidine intermediate.

The protein belongs to the NDK family. As to quaternary structure, hexamer of two different chains: An and B (A6, A5B, A4B2, A3B3, A2B4, AB5, B6). Interacts with CAPN8. Interacts with AKAP13. Interacts with ITGB1BP1 (via C-terminal domain region). Interacts with BCL2L10. It depends on Mg(2+) as a cofactor. In terms of processing, the N-terminus is blocked.

The protein localises to the cytoplasm. It is found in the cell projection. The protein resides in the lamellipodium. It localises to the ruffle. Its subcellular location is the nucleus. The enzyme catalyses a 2'-deoxyribonucleoside 5'-diphosphate + ATP = a 2'-deoxyribonucleoside 5'-triphosphate + ADP. It carries out the reaction a ribonucleoside 5'-diphosphate + ATP = a ribonucleoside 5'-triphosphate + ADP. It catalyses the reaction ATP + protein L-histidine = ADP + protein N-phospho-L-histidine.. Functionally, major role in the synthesis of nucleoside triphosphates other than ATP. The ATP gamma phosphate is transferred to the NDP beta phosphate via a ping-pong mechanism, using a phosphorylated active-site intermediate. Negatively regulates Rho activity by interacting with AKAP13/LBC. Acts as a transcriptional activator of the MYC gene; binds DNA non-specifically. Binds to both single-stranded guanine- and cytosine-rich strands within the nuclease hypersensitive element (NHE) III(1) region of the MYC gene promoter. Does not bind to duplex NHE III(1). Has G-quadruplex (G4) DNA-binding activity, which is independent of its nucleotide-binding and kinase activity. Binds both folded and unfolded G4 with similar low nanomolar affinities. Stabilizes folded G4s regardless of whether they are prefolded or not. Exhibits histidine protein kinase activity. In Rattus norvegicus (Rat), this protein is Nucleoside diphosphate kinase B (Nme2).